Consider the following 591-residue polypeptide: L-fucose isomerase (591 aa).

Active-site proton acceptor residues include Glu-337 and Asp-361. Mn(2+) contacts are provided by Glu-337, Asp-361, and His-528.

This sequence belongs to the L-fucose isomerase family. In terms of assembly, homohexamer. It depends on Mn(2+) as a cofactor.

The protein resides in the cytoplasm. The enzyme catalyses L-fucose = L-fuculose. It functions in the pathway carbohydrate degradation; L-fucose degradation; L-lactaldehyde and glycerone phosphate from L-fucose: step 1/3. Its function is as follows. Converts the aldose L-fucose into the corresponding ketose L-fuculose. The chain is L-fucose isomerase from Salmonella paratyphi A (strain ATCC 9150 / SARB42).